Here is a 100-residue protein sequence, read N- to C-terminus: U-myrmeciitoxin(01)-Mg7c (100 aa).

The first 17 residues, Met1–Ala17, serve as a signal peptide directing secretion. Positions Ile18–Pro50 are excised as a propeptide. Ser85 carries an O-linked (GalNAc...) serine glycan. Residues Thr94 and Thr95 are each glycosylated (O-linked (GalNAc...) threonine).

It belongs to the formicidae venom precursor-01 superfamily. Post-translationally, glycosylation is critical to maintaining the aqueous solubility of this protein, but does not directly contribute to its activity. Expressed by the venom gland.

It localises to the secreted. The protein localises to the target cell membrane. Neurotoxin that triggers pain behavior and inflammation in mammals, and is paralytic and lethal to insects. Causes a time-dependent increase in cell leak current. May act by targeting membranes. This chain is U-myrmeciitoxin(01)-Mg7c, found in Myrmecia gulosa (Red bulldog ant).